We begin with the raw amino-acid sequence, 740 residues long: DNA ligase (740 aa).

The tract at residues 1–20 is disordered; sequence MGPGLTLSGMTEQSSLFPAP. NAD(+) is bound by residues 56–60, 105–106, and glutamate 142; these read DAEYD and SI. Lysine 144 acts as the N6-AMP-lysine intermediate in catalysis. Positions 165, 201, 322, and 346 each coordinate NAD(+). Zn(2+) is bound by residues cysteine 471, cysteine 474, cysteine 489, and cysteine 495. The BRCT domain occupies 654 to 740; the sequence is AATLPLAGMT…RGAPPNAGGG (87 aa).

The protein belongs to the NAD-dependent DNA ligase family. LigA subfamily. Mg(2+) is required as a cofactor. Requires Mn(2+) as cofactor.

The enzyme catalyses NAD(+) + (deoxyribonucleotide)n-3'-hydroxyl + 5'-phospho-(deoxyribonucleotide)m = (deoxyribonucleotide)n+m + AMP + beta-nicotinamide D-nucleotide.. DNA ligase that catalyzes the formation of phosphodiester linkages between 5'-phosphoryl and 3'-hydroxyl groups in double-stranded DNA using NAD as a coenzyme and as the energy source for the reaction. It is essential for DNA replication and repair of damaged DNA. The protein is DNA ligase of Acidovorax ebreus (strain TPSY) (Diaphorobacter sp. (strain TPSY)).